Here is a 192-residue protein sequence, read N- to C-terminus: Neurogenic differentiation factor 1 (192 aa).

Residues 19–71 enclose the bHLH domain; it reads VRRVKANGRERARMHGLNNALDMLREYIPITTQHQKLSKIETLRLARNYIDAL. The tract at residues 116–192 is disordered; that stretch reads PSQFDIFSDP…SHQNTFNYSP (77 aa). Residues 139 to 163 are compositionally biased toward low complexity; it reads SSFSSSSPSSSCSPPQYYYSPTQPS.

As to expression, expressed in neuroblasts of the AB lineage. More specifically in precursors of the embryonic ventral cord motor neurons. Expressed to a lesser degree in the EMS lineage which generates mostly endoderm and mesoderm tissues.

It localises to the nucleus. Functionally, acts as a transcriptional regulator whose activity is required for several aspects of motor neuron fate specification, including cell division patterns, proper spatiotemporal expression of fate-specific markers, and normal axonal morphology and pathfinding. Involved in regulating glial specification. This chain is Neurogenic differentiation factor 1 (cnd-1), found in Caenorhabditis elegans.